A 5412-amino-acid polypeptide reads, in one-letter code: Mucin-4 (5412 aa).

The N-terminal stretch at 1 to 28 (MKGARWRRVPWVSLSCLCLCLLPHVVPG) is a signal peptide. Disordered stretches follow at residues 40–87 (TAAP…TTSK) and 142–249 (TSTD…ATSS). The tract at residues 43–4241 (PVTSTGSTTA…SVSTGHATPL (4199 aa)) is variable number of tandem repeats (VNTR). The segment covering 142-163 (TSTDSTLGNTEETSTAGTESST) has biased composition (low complexity). O-linked (GalNAc...) threonine glycans are attached at residues Thr-154 and Thr-156. Positions 164–199 (PVTSAVSITAGQEGQSRTTSWRTSIQDTSASSQNHW) are enriched in polar residues. The segment covering 200 to 223 (TRSTQTTRESQTSTLTHRTTSTPS) has biased composition (low complexity). The span at 224–249 (FSPSVHNVTGTVSQKTSPSGETATSS) shows a compositional bias: polar residues. N-linked (GlcNAc...) asparagine glycosylation is present at Asn-230. A glycan (O-linked (GalNAc...) threonine) is linked at Thr-234. N-linked (GlcNAc...) asparagine glycosylation occurs at Asn-255. Composition is skewed to polar residues over residues 267–285 (TTSTGSTLGNPGETSSVPV), 306–328 (SPATFSRTSTQDTTAFSKNHQTQ), and 358–367 (GFNPSGTVSQ). 16 disordered regions span residues 267-286 (TTSTGSTLGNPGETSSVPVT), 303-328 (EGQSPATFSRTSTQDTTAFSKNHQTQ), 353-383 (LSSPSGFNPSGTVSQETFPSGETTTSSPSSV), 438-473 (LSPSSLPPKISTAFHTQQSEGAETTGRPHERSSFSP), 488-580 (WPSS…ALLS), 592-853 (TATS…ASAS), 868-963 (VPGT…SGSG), 983-1864 (SSAS…DASS), 1878-2078 (ASSV…TGHA), 2111-2220 (TALH…ASTG), 2232-2814 (SAST…TGHA), 2837-3306 (IPSS…SSVS), 3320-3580 (SAST…VSTG), 3592-3644 (SVST…VSTG), 3656-3756 (SVST…ASTG), and 3769-4223 (VSTG…GHAT). 3 O-linked (GalNAc...) threonine glycosylation sites follow: Thr-364, Thr-369, and Thr-376. Low complexity predominate over residues 368 to 383 (ETFPSGETTTSSPSSV). Composition is skewed to polar residues over residues 450 to 459 (AFHTQQSEGA), 488 to 526 (WPSSFSSKGHTTWSQTELPSTSTGAATRLVTGNPSTGTA), and 546 to 557 (TTYSSHSTTLPK). 2 stretches are compositionally biased toward low complexity: residues 558–577 (TTGAGAQTQWTQETGTTGEA) and 615–627 (STNHSTIHSTSTS). N-linked (GlcNAc...) asparagine glycosylation is present at Asn-617. O-linked (GalNAc...) threonine glycosylation is found at Thr-620, Thr-666, and Thr-688. The segment covering 628–677 (PQESPAVSQRGHTQAPQTTQESQTTRSVSPMTDTKTVTTPGSSFTASGHS) has biased composition (polar residues). The segment covering 705–717 (TTQAPTTALQAAP) has biased composition (low complexity). The span at 729–746 (GTSLSKTGALTLANSVVS) shows a compositional bias: polar residues. A glycan (O-linked (GalNAc...) threonine) is linked at Thr-747. The segment covering 756-771 (TSASASTSPDTAAAMT) has biased composition (low complexity). A compositionally biased stretch (polar residues) spans 772-789 (HTHQAESTEASGQTQTSE). The segment covering 790–828 (PASSGSRTTSAGTATPSSSGASGTTPSGSEGISTSGETT) has biased composition (low complexity). O-linked (GalNAc...) threonine glycosylation is found at Thr-797, Thr-798, Thr-802, Thr-804, Thr-813, and Thr-814. Residues 829-852 (RFSSNPSRDSHTTQSTTELLSASA) are compositionally biased toward polar residues. O-linked (GalNAc...) threonine glycans are attached at residues Thr-881, Thr-886, and Thr-892. Over residues 885 to 903 (PTGQSSPTSPSASPQETAA) the composition is skewed to low complexity. Positions 907–928 (MAQTQRTRTSRGSDTISLASQA) are enriched in polar residues. The segment covering 929–950 (TDTFSTVPPTPPSITSTGLTSP) has biased composition (low complexity). Residues Thr-931, Thr-934, Thr-938, Thr-943, Thr-945, Thr-948, Thr-952, Thr-954, Thr-1003, Thr-1007, Thr-1012, Thr-1019, Thr-1022, Thr-1023, Thr-1028, Thr-1030, Thr-1035, Thr-1039, Thr-1044, Thr-1051, Thr-1055, Thr-1060, Thr-1062, Thr-1067, Thr-1071, Thr-1076, Thr-1083, Thr-1086, Thr-1087, Thr-1092, Thr-1094, Thr-1099, Thr-1103, Thr-1108, Thr-1110, Thr-1115, Thr-1118, Thr-1119, Thr-1124, Thr-1126, Thr-1131, Thr-1135, Thr-1172, Thr-1179, Thr-1182, Thr-1183, Thr-1188, Thr-1195, Thr-1199, Thr-1204, Thr-1236, Thr-1243, Thr-1246, and Thr-1247 are each glycosylated (O-linked (GalNAc...) threonine). The segment covering 951-963 (QTETHTLSPSGSG) has biased composition (polar residues). The span at 1007 to 1024 (TPLPVTSPSSVSTGHTTP) shows a compositional bias: low complexity. The segment covering 1028–1054 (TDTSSESTGHVTPLPVTSFSSASTGDS) has biased composition (polar residues). The segment covering 1060–1086 (TDTSSASTGHVTPLPVTSLSSASTGDT) has biased composition (polar residues). The span at 1092 to 1118 (TDTSSASTGHATSLPVTDTSSVSTGHT) shows a compositional bias: polar residues. Composition is skewed to polar residues over residues 1124 to 1150 (TDTSSASTGHATSLPVTDTSSVSTGHT) and 1157 to 1197 (DASS…STGH). Polar residues-rich tracts occupy residues 1204 to 1213 (TDTSSASTGH) and 1221 to 1246 (DASSVSTDHATSLPVTIPSAASTGHT). Residues 1252–1262 (TDTSSASTGQA) show a composition bias toward polar residues. The span at 1263–1279 (TSLLVTDTSSVSTGDTT) shows a compositional bias: low complexity. 17 O-linked (GalNAc...) threonine glycosylation sites follow: Thr-1278, Thr-1279, Thr-1284, Thr-1286, Thr-1291, Thr-1295, Thr-1300, Thr-1307, Thr-1311, Thr-1316, Thr-1323, Thr-1326, Thr-1332, Thr-1339, Thr-1342, Thr-1343, and Thr-1348. Residues 1281–1325 (LPVTSTSSASTGHVTPLHVTSPSSASTGHATPLPVTSLSSASTGD) are compositionally biased toward polar residues. Residues 1332-1342 (TSPSSASTGDT) show a composition bias toward polar residues. Polar residues-rich tracts occupy residues 1349–1358 (DASSVSTGHT) and 1365–1405 (DASS…STGH). O-linked (GalNAc...) threonine glycans are attached at residues Thr-1380, Thr-1387, Thr-1390, Thr-1391, Thr-1396, Thr-1403, Thr-1407, Thr-1412, Thr-1444, Thr-1451, Thr-1454, and Thr-1455. 2 stretches are compositionally biased toward polar residues: residues 1412-1421 (TDTSSASTGH) and 1429-1454 (DASSVSTDHATSLPVTIPSAASTGHT). Residues 1460-1470 (TDTSSASTGQA) show a composition bias toward polar residues. Positions 1471 to 1487 (TSLLVTDTSSVSTGDTT) are enriched in low complexity. 36 O-linked (GalNAc...) threonine glycosylation sites follow: Thr-1486, Thr-1487, Thr-1492, Thr-1494, Thr-1499, Thr-1503, Thr-1508, Thr-1515, Thr-1519, Thr-1524, Thr-1531, Thr-1534, Thr-1540, Thr-1547, Thr-1550, Thr-1551, Thr-1556, Thr-1563, Thr-1566, Thr-1567, Thr-1572, Thr-1579, Thr-1582, Thr-1583, Thr-1588, Thr-1590, Thr-1598, Thr-1599, Thr-1604, Thr-1611, Thr-1614, Thr-1615, Thr-1620, Thr-1622, Thr-1627, and Thr-1630. The span at 1489-1533 (LPVTSTSSASTGHVTPLHVTSPSSASTGHATPLPVTSLSSASTGD) shows a compositional bias: polar residues. The span at 1540-1550 (TSPSSASTGDT) shows a compositional bias: polar residues. Over residues 1557–1582 (DASSVSTGHTTPLPVTSPSSASTGHT) the composition is skewed to polar residues. Positions 1588 to 1614 (TDTSSASKGDTTPLPVTSPSSASTGHT) are enriched in polar residues. The segment covering 1620–1631 (TDTSSASTGDTT) has biased composition (low complexity). Residues 1633–1661 (LPVTNASSLSTGHATPLHVTSPSSASTGH) show a composition bias toward polar residues. N-linked (GlcNAc...) asparagine glycosylation occurs at Asn-1637. O-linked (GalNAc...) threonine glycans are attached at residues Thr-1659, Thr-1663, Thr-1668, Thr-1670, Thr-1675, Thr-1679, Thr-1716, Thr-1723, Thr-1726, Thr-1727, Thr-1732, Thr-1764, Thr-1766, Thr-1812, Thr-1819, Thr-1822, Thr-1823, Thr-1828, Thr-1835, Thr-1838, Thr-1839, Thr-1844, Thr-1854, and Thr-1855. The segment covering 1668–1679 (TSTSSASTGHAT) has biased composition (low complexity). 3 stretches are compositionally biased toward polar residues: residues 1701 to 1741 (DVSS…STGH), 1749 to 1773 (DASSASTGQATPLPVTDTSSVSTAH), and 1812 to 1822 (TSPSSASTGDT). The span at 1828 to 1840 (TDASSASTGDTTS) shows a compositional bias: low complexity. Polar residues-rich tracts occupy residues 1841-1864 (LPVTIPSSASSGHTTSLPVTDASS), 1892-1902 (TDTNSASTGDT), and 1909-1950 (DASS…SGHT). O-linked (GalNAc...) threonine glycosylation is found at Thr-1931, Thr-1934, Thr-1935, Thr-1940, Thr-1950, Thr-1951, Thr-1956, Thr-1963, Thr-1995, Thr-1999, Thr-2004, Thr-2006, Thr-2015, Thr-2020, Thr-2027, Thr-2030, Thr-2031, Thr-2036, Thr-2038, Thr-2047, Thr-2052, Thr-2062, Thr-2063, Thr-2132, Thr-2137, Thr-2139, Thr-2142, Thr-2143, Thr-2148, Thr-2150, Thr-2155, Thr-2159, Thr-2164, Thr-2180, Thr-2182, Thr-2187, Thr-2191, Thr-2196, Thr-2198, Thr-2203, Thr-2207, Thr-2244, Thr-2254, and Thr-2255. Residues 1957 to 1981 (DASSVPTGHATSLPVTDASSVSTGH) are compositionally biased toward polar residues. Over residues 2004–2030 (TDTSSVSTGQATPLPVTSLSSASTGDT) the composition is skewed to polar residues. The span at 2036–2077 (TDTSSASTGQDTPLPVTSLSSVSTGDTTPLPVTNPSSASTGH) shows a compositional bias: polar residues. The segment covering 2125–2146 (DTTPLPVTSPSSTSTGDTTPLP) has biased composition (low complexity). Over residues 2148-2189 (TETSSVSTGHATSLPVTDTSSASTGHATSLPVTDTSSASTGH) the composition is skewed to polar residues. 2 stretches are compositionally biased toward polar residues: residues 2196 to 2219 (TDTSSASTGQATPLPVTSPSSAST) and 2232 to 2254 (SASTGQATPLPVTSLSSASTGDT). A compositionally biased stretch (polar residues) spans 2261–2270 (DASSVSTGHA). Residues 2271–2283 (TSLPVTSLSSVST) are compositionally biased toward low complexity. O-linked (GalNAc...) threonine glycosylation is found at Thr-2283, Thr-2286, Thr-2287, Thr-2292, Thr-2299, Thr-2303, Thr-2308, Thr-2324, Thr-2331, Thr-2334, Thr-2335, Thr-2340, Thr-2347, Thr-2351, Thr-2356, Thr-2363, Thr-2366, Thr-2367, Thr-2372, Thr-2382, Thr-2383, Thr-2388, Thr-2395, Thr-2398, Thr-2399, and Thr-2406. Residues 2284–2301 (GDTTPLPVTSPSSASTGH) are compositionally biased toward polar residues. Over residues 2309–2349 (DASSASTGHATPLPVTSLSSASTGDTTPLPVTSPSSASTGH) the composition is skewed to polar residues. The span at 2366–2399 (TTPLPVTSSSSASSGHTTPLPVTDASSASTGDTT) shows a compositional bias: low complexity. 2 stretches are compositionally biased toward polar residues: residues 2404–2413 (TDTSSASTGH) and 2421–2445 (GLSSASTGDTTRLPVTNVSSASTGH). An N-linked (GlcNAc...) asparagine glycan is attached at Asn-2437. Thr-2452, Thr-2454, Thr-2459, Thr-2462, Thr-2463, Thr-2468, Thr-2500, Thr-2507, Thr-2510, Thr-2511, Thr-2516, Thr-2518, Thr-2523, and Thr-2526 each carry an O-linked (GalNAc...) threonine glycan. A compositionally biased stretch (low complexity) spans 2452–2471 (TSTSSASTGDTTPLPGTDTS). Residues 2485–2510 (DASSVSTGDTTRLPVTSPSSASTGHT) are compositionally biased toward polar residues. The span at 2517-2573 (DTPSASTGDTTPLPVTNASSLSTRHATSLHVTSPSSASTGHATSLPVTDTSAASTGH) shows a compositional bias: polar residues. N-linked (GlcNAc...) asparagine glycosylation occurs at Asn-2533. O-linked (GalNAc...) threonine glycans are attached at residues Thr-2564, Thr-2566, Thr-2571, Thr-2575, Thr-2580, Thr-2582, Thr-2587, Thr-2590, Thr-2591, Thr-2596, Thr-2598, Thr-2619, Thr-2622, Thr-2623, Thr-2628, Thr-2660, Thr-2667, Thr-2670, Thr-2671, Thr-2676, Thr-2683, Thr-2687, Thr-2692, and Thr-2694. Low complexity predominate over residues 2580 to 2591 (TSTSSASTGDTT). Polar residues-rich tracts occupy residues 2597–2637 (DTYS…STGH) and 2645–2691 (DASS…SLPV). The span at 2692–2704 (TDTSSASTGDTTS) shows a compositional bias: low complexity. A compositionally biased stretch (polar residues) spans 2705-2723 (LPVTDTSSAYTGDTTSLPV). Residues 2724–2735 (TDTSSSSTGDTT) show a composition bias toward low complexity. Residues Thr-2740, Thr-2742, Thr-2750, Thr-2751, Thr-2756, Thr-2758, Thr-2763, and Thr-2767 are each glycosylated (O-linked (GalNAc...) threonine). The segment covering 2740 to 2750 (TETSSVSTGDT) has biased composition (polar residues). The span at 2756–2798 (TDTSSASTGHATPLPVTNTSSVSTGHATPLHVTSPSSASTGHT) shows a compositional bias: polar residues. Asn-2773 is a glycosylation site (N-linked (GlcNAc...) asparagine). O-linked (GalNAc...) threonine glycans are attached at residues Thr-2779, Thr-2783, Thr-2788, Thr-2795, Thr-2798, Thr-2799, and Thr-2804. 2 stretches are compositionally biased toward polar residues: residues 2805 to 2814 (DASSVSTGHA) and 2837 to 2846 (IPSSASSGHT). O-linked (GalNAc...) threonine glycans are attached at residues Thr-2846, Thr-2847, and Thr-2852. Positions 2853 to 2877 (DASSVSTGHATSLPVTDASSVSTGH) are enriched in polar residues. The segment covering 2895 to 2907 (TPLPLTSLSSVST) has biased composition (low complexity). O-linked (GalNAc...) threonine glycosylation is found at Thr-2910, Thr-2911, Thr-2916, Thr-2918, Thr-2923, Thr-2927, Thr-2932, Thr-2939, Thr-2942, Thr-2943, Thr-2948, Thr-2950, Thr-2955, Thr-2959, Thr-2966, Thr-2971, and Thr-2975. The span at 2916 to 2942 (TDTSSASTGQATPLPVTSLSSVSTGDT) shows a compositional bias: polar residues. The segment covering 2948–2973 (TDTSSASTGHATSLPVTDTSSASTGH) has biased composition (polar residues). 2 stretches are compositionally biased toward polar residues: residues 2980 to 2989 (TDTSSASTGH) and 3009 to 3037 (LPVTDTSSISTGHATPLHVTSPSSASTGH). Residues Thr-3023, Thr-3028, Thr-3035, and Thr-3039 are each glycosylated (O-linked (GalNAc...) threonine). Positions 3044–3069 (TDTSSASTGHANPLHVTSPSSASTGH) are enriched in polar residues. Thr-3071, Thr-3076, Thr-3078, Thr-3083, Thr-3087, Thr-3092, Thr-3099, Thr-3102, Thr-3103, Thr-3108, Thr-3115, Thr-3118, Thr-3119, Thr-3124, Thr-3126, Thr-3131, Thr-3135, Thr-3140, Thr-3142, Thr-3147, Thr-3150, Thr-3151, Thr-3156, Thr-3158, Thr-3163, Thr-3167, Thr-3172, Thr-3179, Thr-3182, Thr-3183, Thr-3188, Thr-3220, Thr-3227, Thr-3230, Thr-3231, Thr-3236, Thr-3243, Thr-3247, Thr-3252, and Thr-3254 each carry an O-linked (GalNAc...) threonine glycan. Residues 3076-3118 (TDTSSASTGHATPLPVTSLSSVSTGDTTPLPVTSPSSASTGHT) show a composition bias toward polar residues. The segment covering 3124 to 3134 (TDTSSASTGQA) has biased composition (polar residues). A compositionally biased stretch (low complexity) spans 3140–3151 (TSTSSASTGDTT). Composition is skewed to polar residues over residues 3156–3197 (TDTS…STGH) and 3205–3251 (DASS…SLPV). Low complexity predominate over residues 3252–3264 (TDTSSASTGDTTS). Residues 3265 to 3283 (LPVTDTSSAYTGDTTSLPV) show a composition bias toward polar residues. Residues 3284 to 3295 (TDTSSSSTGDTT) show a composition bias toward low complexity. O-linked (GalNAc...) threonine glycans are attached at residues Thr-3294, Thr-3332, Thr-3339, Thr-3342, Thr-3343, Thr-3348, Thr-3350, Thr-3355, and Thr-3359. A compositionally biased stretch (polar residues) spans 3320–3337 (SASTGHATPLHVTSPSSA). The span at 3338–3356 (STGDTTPVPVTDTSSVSTG) shows a compositional bias: low complexity. Composition is skewed to polar residues over residues 3365-3374 (GLSSASTGDT) and 3381-3405 (DISSASTGQATPLPVTNTSSVSTGD). Asn-3397 carries N-linked (GlcNAc...) asparagine glycosylation. Thr-3398, Thr-3403, Thr-3406, Thr-3412, Thr-3419, Thr-3423, Thr-3428, Thr-3430, Thr-3435, Thr-3439, and Thr-3444 each carry an O-linked (GalNAc...) threonine glycan. A compositionally biased stretch (polar residues) spans 3412-3421 (TSPSSASTGH). The segment covering 3428–3471 (TSTSSASTGHATPVPVTSTSSASTGHTTPLPVTDTSSASTGDTT) has biased composition (low complexity). An O-linked (GalNAc...) serine glycan is attached at Ser-3445. 99 O-linked (GalNAc...) threonine glycosylation sites follow: Thr-3446, Thr-3451, Thr-3454, Thr-3455, Thr-3460, Thr-3462, Thr-3467, Thr-3470, Thr-3471, Thr-3476, Thr-3483, Thr-3486, Thr-3487, Thr-3492, Thr-3499, Thr-3502, Thr-3504, Thr-3508, Thr-3515, Thr-3519, Thr-3524, Thr-3526, Thr-3531, Thr-3535, Thr-3540, Thr-3547, Thr-3550, Thr-3551, Thr-3556, Thr-3567, Thr-3614, Thr-3615, Thr-3622, Thr-3678, Thr-3679, Thr-3686, Thr-3691, Thr-3695, Thr-3700, Thr-3710, Thr-3711, Thr-3716, Thr-3718, Thr-3723, Thr-3727, Thr-3732, Thr-3739, Thr-3743, Thr-3748, Thr-3780, Thr-3787, Thr-3790, Thr-3791, Thr-3796, Thr-3798, Thr-3803, Thr-3807, Thr-3812, Thr-3822, Thr-3823, Thr-3828, Thr-3835, Thr-3839, Thr-3844, Thr-3851, Thr-3854, Thr-3860, Thr-3867, Thr-3871, Thr-3876, Thr-3883, Thr-3886, Thr-3887, Thr-3892, Thr-3894, Thr-3899, Thr-3903, Thr-3935, Thr-3940, Thr-3942, Thr-3947, Thr-3950, Thr-3951, Thr-3956, Thr-3958, Thr-3963, Thr-3967, Thr-3972, Thr-3979, Thr-3983, Thr-3988, Thr-3990, Thr-3995, Thr-3999, Thr-4004, Thr-4006, Thr-4011, Thr-4015, and Thr-4020. Over residues 3473 to 3486 (LPVTSPSSASTGHT) the composition is skewed to polar residues. Positions 3493-3517 (IPSSASTGDTSTLPVTGASSASTGH) are enriched in polar residues. Positions 3524 to 3550 (TDTSSVSTGHATPLPVTSLSSVSTGDT) are enriched in polar residues. Positions 3557–3580 (DASSASTGQATPLPVTSLSSVSTG) are enriched in polar residues. Residues 3604–3615 (TDTSSASTGDTT) are compositionally biased toward low complexity. The segment covering 3620-3644 (TDTSSASTGQATPLPVTSLSSVSTG) has biased composition (polar residues). The span at 3668–3679 (TDTSSASTGDTT) shows a compositional bias: low complexity. A compositionally biased stretch (polar residues) spans 3684–3694 (TDTSSASTGQA). Over residues 3710–3728 (TTPLPVTSTSSVSTGHVTP) the composition is skewed to low complexity. A compositionally biased stretch (polar residues) spans 3730 to 3741 (HVTSPSSASTGH). Residues 3780 to 3791 (TDASSASTGDTT) show a composition bias toward low complexity. The segment covering 3796–3822 (TDTSSASTGQATPLPVTSLSSVSTGDT) has biased composition (polar residues). Polar residues predominate over residues 3860–3869 (TSPSSASTGH). Residues 3877–3886 (GLSSASTGDT) show a composition bias toward polar residues. A compositionally biased stretch (polar residues) spans 3892 to 3901 (TDTSSASTRH). Residues 3940-3951 (TSTSSASTGDTT) show a composition bias toward low complexity. A compositionally biased stretch (polar residues) spans 3956–3981 (TDTSSVSTGHATSLPVTSRSSASTGH). The span at 3988-3997 (TDTSSVSTGH) shows a compositional bias: polar residues. Over residues 3999–4011 (TPLPVTSTSSVST) the composition is skewed to low complexity. A compositionally biased stretch (polar residues) spans 4018–4029 (PVTSPSSASTGH). 4 O-linked (GalNAc...) serine glycosylation sites follow: Ser-4021, Ser-4023, Ser-4024, and Ser-4026. O-linked (GalNAc...) threonine glycosylation is found at Thr-4027, Thr-4031, and Thr-4036. Low complexity predominate over residues 4030 to 4047 (ATPVPVTSTSSASTGDTT). O-linked (GalNAc...) serine glycosylation is present at Ser-4037. O-linked (GalNAc...) threonine glycosylation is found at Thr-4038, Thr-4043, Thr-4046, and Thr-4047. The span at 4049–4093 (LPVTNASSLSTGHATPLHVTSPSSASRGDTSTLPVTDASSASTGH) shows a compositional bias: polar residues. The N-linked (GlcNAc...) asparagine glycan is linked to Asn-4053. Residues Thr-4078 and Thr-4084 are each glycosylated (O-linked (GalNAc...) threonine). Low complexity predominate over residues 4095–4107 (TPLPLTSLSSVST). Thr-4110, Thr-4111, Thr-4116, Thr-4118, Thr-4123, Thr-4127, Thr-4132, Thr-4139, Thr-4142, Thr-4143, Thr-4148, Thr-4158, Thr-4159, Thr-4164, Thr-4171, Thr-4175, Thr-4180, Thr-4182, Thr-4187, Thr-4190, Thr-4191, Thr-4196, Thr-4198, Thr-4203, Thr-4207, Thr-4212, Thr-4214, Thr-4219, Thr-4223, and Thr-4239 each carry an O-linked (GalNAc...) threonine glycan. Positions 4116-4142 (TDTSSASTGQATPLPVTSLSSVSTGDT) are enriched in polar residues. Positions 4149–4173 (IPSSASSGHTTSLPVTDASSVSTGH) are enriched in polar residues. Over residues 4180-4191 (TSTSSASTGDTT) the composition is skewed to low complexity. The segment covering 4196–4205 (TDTSSASTGH) has biased composition (polar residues). Residues 4212–4223 (TDTSSASTGHAT) are compositionally biased toward polar residues. A compositionally biased stretch (low complexity) spans 4242–4254 (AVSSATSASTVSS). The disordered stretch occupies residues 4242-4288 (AVSSATSASTVSSDSPLKMETPGMTTPSLKTDGGRRTATSPPPTTSQ). O-linked (GalNAc...) threonine glycans are attached at residues Thr-4272, Thr-4278, Thr-4280, Thr-4289, Thr-4293, and Thr-4297. Residues 4397–4552 (PFWDDADFST…GLQFYRLHRE (156 aa)) form the NIDO domain. The AMOP domain maps to 4553–4668 (ERPNYRLECL…YLCALYQQRR (116 aa)). Positions 4680 to 4880 (QPAWMFGDPH…TWQINGTGLL (201 aa)) constitute a VWFD domain. Asn-4715, Asn-4768, Asn-4787, Asn-4796, Asn-4831, Asn-4852, Asn-4875, Asn-4902, Asn-4928, Asn-4946, Asn-4982, Asn-4997, Asn-5045, Asn-5052, Asn-5100, and Asn-5119 each carry an N-linked (GlcNAc...) asparagine glycan. In terms of domain architecture, EGF-like 1 spans 5118–5157 (QNQSCPVNYCYNQGHCYISQTLGCQPMCTCPPAFTDSRCF). 3 cysteine pairs are disulfide-bonded: Cys-5122–Cys-5133, Cys-5127–Cys-5145, and Cys-5147–Cys-5156. 3 N-linked (GlcNAc...) asparagine glycosylation sites follow: Asn-5185, Asn-5192, and Asn-5292. Residues 5321-5360 (VSPCSRGYCDHGGQCQHLPSGPRCSCVSFSIYTAWGEHCE) enclose the EGF-like 2 domain. Intrachain disulfides connect Cys-5324-Cys-5335, Cys-5329-Cys-5344, and Cys-5346-Cys-5359. Residues 5369–5389 (FFGIFFGALGGLLLLGVGTFV) traverse the membrane as a helical segment.

In terms of assembly, a heterodimeric complex, composed of a mucin-4 alpha chain and a cysteine-rich transmembrane mucin-4 beta chain. Mucin-4 beta chain interacts with ERBB2 via the EGF-like domain 1. In nonpolarized cells, associates with ERBB2 and ERBB3. Post-translationally, proteolytically cleaved into 2 chains, mucin-4 alpha chain and mucin-4 beta chain. Highly O-glycosylated. In terms of processing, is predominantly N-glycosylated. In terms of tissue distribution, expressed in the thymus, thyroid, lung, trachea, esophagus, stomach, small intestine, colon, testis, prostate, ovary, uterus, placenta, and mammary and salivary glands. Expressed in carcinomas arising from some of these epithelia, such as lung cancers, squamous cell carcinomas of the upper aerodigestive tract, mammary carcinomas, biliary tract, colon, and cervix cancers. Minimally or not expressed in the normal pancreas or chronic pancreatitis, but is highly expressed in pancreatic tumors and pancreatic tumor cell lines.

It localises to the cell membrane. The protein resides in the secreted. Membrane-bound mucin, a family of highly glycosylated proteins that constitute the major component of the mucus, the slimy and viscous secretion covering epithelial surfaces. These glycoproteins play important roles in the protection of the epithelium and are implicated in epithelial renewal and differentiation. Regulates cellular behavior through both anti-adhesive effects on cell-cell and cell-extracellular matrix interactions and its ability to act as an intramembrane ligand for ERBB2. Plays an important role in proliferation and differentiation of epithelial cells by inducing specific phosphorylation of ERBB2. In polarized epithelial cells, segregates ERBB2 and other ERBB receptors and prevents ERBB2 from acting as a coreceptor. The interaction with ERBB2 leads to enhanced expression of CDKN1B. The formation of a MUC4-ERBB2-ERBB3-NRG1 complex leads to down-regulation of CDKN1B, resulting in repression of apoptosis and stimulation of proliferation. Its ability to promote tumor growth may be mainly due to repression of apoptosis as opposed to proliferation. The sequence is that of Mucin-4 (MUC4) from Homo sapiens (Human).